We begin with the raw amino-acid sequence, 351 residues long: MSQARPATLRVAVLGAGSWGTALAAAASRRHPTVLWARDGAQAQAMAARHENTRYLPGVALPPALQVSADLAQALAHLAHDPAHALIILGVPVAGMTPLCTELAARLPALGLQAVPLVWTCKGFEEQTAHLPHETVQAALGAMPGLAAGVLSGPSFAREVAQGLPVALTVASESSAVRDAVTTALHGAAVRIYASTDVVGVEVGGALKNVIAVACGICDGLALGTNARAALITRGLAEMARFGAALGAQQETFAGLTGLGDLVLTATGELSRNRRVGLEIGAGRKLADILASGMTAEGVRCARAARDRARALNIELPITEAVCAVLFEGLSPMTAVSALLAREARPESPTP.

NADPH contacts are provided by Ser-18, Trp-19, Arg-38, and Lys-122. Sn-glycerol 3-phosphate contacts are provided by Lys-122, Gly-153, and Ser-155. Ala-157 serves as a coordination point for NADPH. Residues Lys-208, Asp-261, Ser-271, Arg-272, and Asn-273 each coordinate sn-glycerol 3-phosphate. Lys-208 (proton acceptor) is an active-site residue. Arg-272 contributes to the NADPH binding site. Glu-297 lines the NADPH pocket.

This sequence belongs to the NAD-dependent glycerol-3-phosphate dehydrogenase family.

It localises to the cytoplasm. It carries out the reaction sn-glycerol 3-phosphate + NAD(+) = dihydroxyacetone phosphate + NADH + H(+). The catalysed reaction is sn-glycerol 3-phosphate + NADP(+) = dihydroxyacetone phosphate + NADPH + H(+). It participates in membrane lipid metabolism; glycerophospholipid metabolism. Its function is as follows. Catalyzes the reduction of the glycolytic intermediate dihydroxyacetone phosphate (DHAP) to sn-glycerol 3-phosphate (G3P), the key precursor for phospholipid synthesis. This Bordetella parapertussis (strain 12822 / ATCC BAA-587 / NCTC 13253) protein is Glycerol-3-phosphate dehydrogenase [NAD(P)+].